We begin with the raw amino-acid sequence, 164 residues long: Succinate dehydrogenase assembly factor 2, mitochondrial (164 aa).

Residues 1-27 (MAVVTLIPTLARVLSKHSLLSPLLSVT) constitute a mitochondrion transit peptide.

The protein belongs to the SDHAF2 family. Interacts with SDHA within the SDH catalytic dimer.

The protein localises to the mitochondrion matrix. In terms of biological role, plays an essential role in the assembly of succinate dehydrogenase (SDH), an enzyme complex (also referred to as respiratory complex II) that is a component of both the tricarboxylic acid (TCA) cycle and the mitochondrial electron transport chain, and which couples the oxidation of succinate to fumarate with the reduction of ubiquinone (coenzyme Q) to ubiquinol. Required for flavinylation (covalent attachment of FAD) of the flavoprotein subunit SDHA of the SDH catalytic dimer. The protein is Succinate dehydrogenase assembly factor 2, mitochondrial of Rattus norvegicus (Rat).